The primary structure comprises 416 residues: Transcription factor caaR (416 aa).

The zn(2)-C6 fungal-type DNA-binding region spans cysteine 13 to cysteine 44. Disordered stretches follow at residues alanine 68–alanine 90 and glutamine 130–asparagine 150. Positions glutamine 130–arginine 141 are enriched in pro residues. The next 2 membrane-spanning stretches (helical) occupy residues valine 249–leucine 269 and serine 302–leucine 322.

It localises to the membrane. The protein localises to the nucleus. Transcription factor that positively regulates the expression of the gene cluster that mediates the biosynthesis of the acyltetronic acid derivatives carlosic acid, agglomerin F and carlosic acid methyl ether. In Aspergillus niger (strain ATCC MYA-4892 / CBS 513.88 / FGSC A1513), this protein is Transcription factor caaR.